The chain runs to 322 residues: Serine/threonine-protein phosphatase PP1-2 (322 aa).

Mn(2+) contacts are provided by Asp60, His62, Asp88, and Asn120. The active-site Proton donor is His121. Mn(2+) is bound by residues His169 and His244. The tract at residues Arg298–Asn322 is disordered. The span at Val301–Leu316 shows a compositional bias: polar residues.

The protein belongs to the PPP phosphatase family. PP-1 subfamily. It depends on Mn(2+) as a cofactor.

The enzyme catalyses O-phospho-L-seryl-[protein] + H2O = L-seryl-[protein] + phosphate. The catalysed reaction is O-phospho-L-threonyl-[protein] + H2O = L-threonyl-[protein] + phosphate. Functionally, essential role in cell cycle control. PP1 is perhaps required for exit from mitosis. The chain is Serine/threonine-protein phosphatase PP1-2 (sds21) from Schizosaccharomyces pombe (strain 972 / ATCC 24843) (Fission yeast).